Here is a 203-residue protein sequence, read N- to C-terminus: Glycerol-3-phosphate acyltransferase (203 aa).

6 helical membrane-spanning segments follow: residues 5–25 (IIYLLAYLIGAIPFGLLLAQI), 58–78 (TLAVATVILDALKGVLPILMA), 87–107 (ILWTMAVLAVFGHCFSPYLKF), 118–138 (GVLAVFLPFEIICALLAWFII), 150–170 (LGAMIVLIATSFIFHYDIPVI), and 176–196 (IFIIAFIVVYKHIPNILRLIG).

The protein belongs to the PlsY family. In terms of assembly, probably interacts with PlsX.

The protein localises to the cell inner membrane. It carries out the reaction an acyl phosphate + sn-glycerol 3-phosphate = a 1-acyl-sn-glycero-3-phosphate + phosphate. It participates in lipid metabolism; phospholipid metabolism. In terms of biological role, catalyzes the transfer of an acyl group from acyl-phosphate (acyl-PO(4)) to glycerol-3-phosphate (G3P) to form lysophosphatidic acid (LPA). This enzyme utilizes acyl-phosphate as fatty acyl donor, but not acyl-CoA or acyl-ACP. The chain is Glycerol-3-phosphate acyltransferase from Campylobacter lari (strain RM2100 / D67 / ATCC BAA-1060).